A 226-amino-acid polypeptide reads, in one-letter code: MKITYLTLFPNLMRCYFEDSILKRALEKKLFEIEFIDYRAFSHNKHKKVDRYKIGGGAGMLLEPRPIADALEFIKKKESWVVFTTPVAKRFTQKDAKRLAHKKHIVFVNGRYEGFDERLIEIYADEVFSIGDFILTGGELASLVMSDAIVRNIPGVLGNSASLEEESFEGDLLEAPSFTKPDVFKGKAVIKEFLKGNHSKISALKYQLARLRTKYYRPDKRIEDEK.

Residues Gly110 and 130–135 (IGDFIL) contribute to the S-adenosyl-L-methionine site.

It belongs to the RNA methyltransferase TrmD family. In terms of assembly, homodimer.

Its subcellular location is the cytoplasm. The enzyme catalyses guanosine(37) in tRNA + S-adenosyl-L-methionine = N(1)-methylguanosine(37) in tRNA + S-adenosyl-L-homocysteine + H(+). In terms of biological role, specifically methylates guanosine-37 in various tRNAs. This chain is tRNA (guanine-N(1)-)-methyltransferase, found in Nitratiruptor sp. (strain SB155-2).